The following is a 231-amino-acid chain: Ribonuclease 3 (231 aa).

Positions 1-134 constitute an RNase III domain; it reads MKTLEKKLAE…FLGALLLDAG (134 aa). Position 47 (Glu-47) interacts with Mg(2+). Asp-51 is a catalytic residue. 2 residues coordinate Mg(2+): Asp-120 and Glu-123. The active site involves Glu-123. The 70-residue stretch at 160–229 folds into the DRBM domain; sequence DYKTALQELL…AKNALEKLQR (70 aa).

Belongs to the ribonuclease III family. In terms of assembly, homodimer. Mg(2+) is required as a cofactor.

Its subcellular location is the cytoplasm. The enzyme catalyses Endonucleolytic cleavage to 5'-phosphomonoester.. In terms of biological role, digests double-stranded RNA. Involved in the processing of primary rRNA transcript to yield the immediate precursors to the large and small rRNAs (23S and 16S). Also processes some mRNAs, and tRNAs when they are encoded in the rRNA operon. Its function is as follows. CRISPR (clustered regularly interspaced short palindromic repeat) is an adaptive immune system that provides protection against mobile genetic elements (viruses, transposable elements and conjugative plasmids). CRISPR clusters contain spacers, sequences complementary to antecedent mobile elements, and target invading nucleic acids. CRISPR clusters are transcribed and processed into CRISPR RNA (crRNA). In this organism endogenous ribonuclease 3 and Cas9 are required for correct coprocessing of pre-crRNA and the trans-encoded small RNA (tracrRNA). Cas9, crRNA and tracrRNA are required for cleavage of invading DNA. Complements pre-crRNA and tracrRNA coprocessing defects in an rnc deletion in S.pyogenes strain 370. In Streptococcus mutans serotype c (strain ATCC 700610 / UA159), this protein is Ribonuclease 3.